We begin with the raw amino-acid sequence, 689 residues long: Glycine--tRNA ligase beta subunit (689 aa).

The protein belongs to the class-II aminoacyl-tRNA synthetase family. As to quaternary structure, tetramer of two alpha and two beta subunits.

It is found in the cytoplasm. It catalyses the reaction tRNA(Gly) + glycine + ATP = glycyl-tRNA(Gly) + AMP + diphosphate. In Salmonella paratyphi A (strain ATCC 9150 / SARB42), this protein is Glycine--tRNA ligase beta subunit.